A 359-amino-acid polypeptide reads, in one-letter code: 4-galactosyl-N-acetylglucosaminide 3-alpha-L-fucosyltransferase 9 (359 aa).

At 1 to 11 the chain is on the cytoplasmic side; the sequence is MTSASKGILRP. Residues 12–32 traverse the membrane as a helical; Signal-anchor for type II membrane protein segment; the sequence is FLIVCIILGCFMACLLIYIKP. Topologically, residues 33–359 are lumenal; that stretch reads TNSWIFSPME…VGNLEKWFWN (327 aa). Residue N62 is glycosylated (N-linked (GlcNAc...) asparagine). The interval 63-168 is acceptor-binding; that stretch reads ETTILIWVWP…RRDSDIQVPY (106 aa). Q75 contributes to the a beta-D-galactosyl-(1-&gt;4)-N-acetyl-beta-D-glucosaminyl derivative binding site. 3 disulfides stabilise this stretch: C82–C335, C91–C338, and C190–C238. N-linked (GlcNAc...) asparagine glycosylation is present at N101. E137 contacts a beta-D-galactosyl-(1-&gt;4)-N-acetyl-beta-D-glucosaminyl derivative. The active-site Nucleophile is the E137. Position 137 (E137) interacts with GDP-beta-L-fucose. N153 carries N-linked (GlcNAc...) asparagine glycosylation. GDP-beta-L-fucose-binding residues include Y168, V192, S194, N195, R202, V226, Y241, N246, Y252, E255, and K256. The tract at residues 169–326 is donor-binding; that stretch reads GFLTVSTNPF…NWRKDFTVNL (158 aa). The tract at residues 327 to 359 is acceptor-binding; sequence PRFWESHACLACDHVKRHQEYKSVGNLEKWFWN.

It belongs to the glycosyltransferase 10 family. As to quaternary structure, homodimer. N-glycosylated with complex-type N-glycans.

It localises to the golgi apparatus. Its subcellular location is the trans-Golgi network membrane. The protein localises to the golgi apparatus membrane. The enzyme catalyses a beta-D-galactosyl-(1-&gt;4)-N-acetyl-beta-D-glucosaminyl derivative + GDP-beta-L-fucose = a beta-D-galactosyl-(1-&gt;4)-[alpha-L-fucosyl-(1-&gt;3)]-N-acetyl-beta-D-glucosaminyl derivative + GDP + H(+). It carries out the reaction an alpha-Neu5Ac-(2-&gt;3)-beta-D-Gal-(1-&gt;4)-beta-D-GlcNAc-(1-&gt;3)-beta-D-Gal-(1-&gt;4)-beta-D-GlcNAc derivative + GDP-beta-L-fucose = an alpha-Neu5Ac-(2-&gt;3)-beta-D-Gal-(1-&gt;4)-beta-D-GlcNAc-(1-&gt;3)-beta-D-Gal-(1-&gt;4)-[alpha-L-Fuc-(1-&gt;3)]-beta-D-GlcNAc derivative + GDP + H(+). The catalysed reaction is alpha-N-glycoloylneuraminosyl-(2-&gt;3)-beta-D-galactosyl-(1-&gt;4)-N-acetyl-beta-D-glucosaminyl-(1-&gt;3)-beta-D-galactosyl-(1-&gt;4)-N-acetyl-beta-D-glucosaminyl-(1-&gt;3)-beta-D-galactosyl-(1-&gt;4)-beta-D-glucosyl-(1&lt;-&gt;1')-ceramide + GDP-beta-L-fucose = alpha-N-glycoloylneuraminosyl-(2-&gt;3)-beta-D-galactosyl-(1-&gt;4)-N-acetyl-beta-D-glucosaminyl-(1-&gt;3)-beta-D-galactosyl-(1-&gt;4)-[alpha-L-fucosyl-(1-&gt;3)]-N-acetyl-beta-D-glucosaminyl-(1-&gt;3)-beta-D-galactosyl-(1-&gt;4)-beta-D-glucosyl-(1&lt;-&gt;1')-ceramide + GDP + H(+). It catalyses the reaction alpha-D-galactosyl-(1-&gt;3)-beta-D-galactosyl-(1-&gt;4)-N-acetyl-beta-D-glucosaminyl-(1-&gt;3)-beta-D-galactosyl-(1-&gt;4)-beta-D-glucosyl-(1&lt;-&gt;1')-ceramide + GDP-beta-L-fucose = a neolactoside IV(3)-alpha-Gal,III(3)-alpha-Fuc-nLc4Cer + GDP + H(+). The enzyme catalyses a neolactoside nLc4Cer + GDP-beta-L-fucose = a neolactoside III(3)-alpha-Fuc-nLc4Cer + GDP + H(+). It carries out the reaction an N-acetyl-alpha-neuraminyl-(2-&gt;3)-beta-D-galactosyl-(1-&gt;4)-N-acetyl-beta-D-glucosaminyl derivative + GDP-beta-L-fucose = an alpha-Neu5Ac-(2-&gt;3)-beta-D-Gal-(1-&gt;4)-[alpha-L-Fuc-(1-&gt;3)]-beta-D-GlcNAc derivative + GDP + H(+). The catalysed reaction is beta-D-Gal-(1-&gt;4)-beta-D-GlcNAc-(1-&gt;3)-beta-D-Gal-(1-&gt;4)-D-Glc + GDP-beta-L-fucose = beta-D-Gal-(1-&gt;4)-[alpha-L-Fuc-(1-&gt;3)]-beta-D-GlcNAc-(1-&gt;3)-beta-D-Gal-(1-&gt;4)-D-Glc + GDP + H(+). It catalyses the reaction an alpha-L-Fuc-(1-&gt;2)-beta-D-Gal-(1-&gt;4)-beta-D-GlcNAc derivative + GDP-beta-L-fucose = an alpha-L-Fuc-(1-&gt;2)-beta-D-Gal-(1-&gt;4)-[alpha-L-Fuc-(1-&gt;3)]-beta-D-GlcNAc derivative + GDP + H(+). The protein operates within protein modification; protein glycosylation. Its pathway is glycolipid biosynthesis. Its activity is regulated as follows. Activated by Mn2+. Functionally, catalyzes alpha(1-&gt;3) linkage of fucosyl moiety transferred from GDP-beta-L-fucose to N-acetyl glucosamine (GlcNAc) within type 2 lactosamine (LacNAc, beta-D-Gal-(1-&gt;4)-beta-D-GlcNAc-) glycan attached to glycolipids and N- or O-linked glycoproteins. Fucosylates distal type 2 LacNAc and its fucosylated (H-type 2 LacNAc) and sialylated (sialyl-type 2 LacNAc) derivatives to form Lewis x (Lex) (CD15) and Lewis y (Ley) antigenic epitopes involved in cell adhesion and differentiation. Generates Lex epitopes in the brain, presumably playing a role in the maintenance of neuronal stemness and neurite outgrowth in progenitor neural cells. Fucosylates the internal type 2 LacNAc unit of the polylactosamine chain to form VIM-2 antigen that serves as recognition epitope for SELE. Can also modify milk oligosaccharides in particular type 2 tetrasaccharide LNnT. This Canis lupus familiaris (Dog) protein is 4-galactosyl-N-acetylglucosaminide 3-alpha-L-fucosyltransferase 9.